The following is a 967-amino-acid chain: Vitamin B12-dependent ribonucleotide reductase (967 aa).

A disordered region spans residues 1 to 23 (MTETASGPARSSRAKGTKAGKGL). Residues Ser-143, 159-160 (AC), Gly-188, 364-368 (NPCSE), and 554-558 (PTGTI) each bind substrate. An intrachain disulfide couples Cys-160 to Cys-377. Residue Asn-364 is the Proton acceptor of the active site. Cys-366 serves as the catalytic Cysteine radical intermediate. The Proton acceptor role is filled by Glu-368.

It belongs to the ribonucleoside diphosphate reductase class-2 family. The cofactor is adenosylcob(III)alamin.

It carries out the reaction a 2'-deoxyribonucleoside 5'-diphosphate + [thioredoxin]-disulfide + H2O = a ribonucleoside 5'-diphosphate + [thioredoxin]-dithiol. Catalyzes the reduction of ribonucleotides to deoxyribonucleotides. May function to provide a pool of deoxyribonucleotide precursors for DNA repair during oxygen limitation and/or for immediate growth after restoration of oxygen. The polypeptide is Vitamin B12-dependent ribonucleotide reductase (nrdJ) (Streptomyces coelicolor (strain ATCC BAA-471 / A3(2) / M145)).